Here is a 472-residue protein sequence, read N- to C-terminus: Pyruvate kinase (472 aa).

Substrate is bound at residue R33. K(+) is bound by residues N35, S37, and D67. 35–38 contacts ATP; the sequence is NFSH. 2 residues coordinate ATP: R74 and K155. E220 is a binding site for Mg(2+). G243, D244, and T276 together coordinate substrate. Mg(2+) is bound at residue D244.

The protein belongs to the pyruvate kinase family. As to quaternary structure, homotetramer. It depends on Mg(2+) as a cofactor. K(+) is required as a cofactor.

The enzyme catalyses pyruvate + ATP = phosphoenolpyruvate + ADP + H(+). It functions in the pathway carbohydrate degradation; glycolysis; pyruvate from D-glyceraldehyde 3-phosphate: step 5/5. The polypeptide is Pyruvate kinase (pyk) (Mycobacterium tuberculosis (strain CDC 1551 / Oshkosh)).